Here is a 334-residue protein sequence, read N- to C-terminus: Mediator of RNA polymerase II transcription subunit 4 (334 aa).

The stretch at 76–100 forms a coiled coil; that stretch reads LIRTLKAHVEKRDEVIQQVENNLKA. The segment covering 188-203 has biased composition (low complexity); sequence SSAQKPIIASPSASSS. Disordered stretches follow at residues 188–234 and 252–334; these read SSAQ…GYGA and EKQW…GRNK. 2 stretches are compositionally biased toward polar residues: residues 204–225 and 264–282; these read NGGTAPTRTVGTPLVNSATNGD and ATSSQSPLSGAPQSPSSPS.

Belongs to the Mediator complex subunit 4 family. As to quaternary structure, component of the Mediator complex.

It is found in the nucleus. Functionally, component of the Mediator complex, a coactivator involved in the regulated transcription of nearly all RNA polymerase II-dependent genes. Mediator functions as a bridge to convey information from gene-specific regulatory proteins to the basal RNA polymerase II transcription machinery. Mediator is recruited to promoters by direct interactions with regulatory proteins and serves as a scaffold for the assembly of a functional preinitiation complex with RNA polymerase II and the general transcription factors. This is Mediator of RNA polymerase II transcription subunit 4 (mdt-4) from Caenorhabditis briggsae.